Here is a 1149-residue protein sequence, read N- to C-terminus: Potassium channel subfamily U member 1 (1149 aa).

The Extracellular portion of the chain corresponds to 1–24 (MFQTKLRNESWEDLQKMSCTTEIQ). Residues 25–45 (VAFILSSFMTFISGLIILLIF) form a helical membrane-spanning segment. At 46 to 101 (RLIWRTVKKWQIIKGTGIILELFTSGSIRRNHVRSLHFHGRFRDRIEMLLSAQTFV) the chain is on the cytoplasmic side. A helical membrane pass occupies residues 102-122 (GQVLVILVFVLSIGSLIIYFI). Topologically, residues 123-138 (NSADPVGSCSSYEDKT) are extracellular. The chain crosses the membrane as a helical span at residues 139–159 (IPVDLVFNAFFSFYFGLRFMA). At 160–163 (ADDK) the chain is on the cytoplasmic side. Residues 164 to 184 (IKFWLEMNSIVDIFTIPPTFI) form a helical membrane-spanning segment. The Extracellular segment spans residues 185-188 (SYYL). Residues 189 to 209 (KSNWLGLRFLRALRLLELPRI) form a helical; Voltage-sensor membrane-spanning segment. At 210–226 (LQILRAIKTSNSVKFSK) the chain is on the cytoplasmic side. Residues 227–247 (LLSIVLSTWFTAAGFIHLVEN) form a helical membrane-spanning segment. Residues 248-259 (SGDPWLKGRNSQ) lie on the Extracellular side of the membrane. The segment at residues 260–282 (NISYFDSVYLVMATTSTVGFGDV) is an intramembrane region (pore-forming). Positions 276-279 (TVGF) match the Selectivity for potassium motif. The Extracellular segment spans residues 283–291 (VAKTSLGRT). Residues 292–312 (FIIFFTLGSLILFANYIPEMV) traverse the membrane as a helical segment. Topologically, residues 313 to 1149 (ELFANKRKYT…EDPFAYSEPL (837 aa)) are cytoplasmic. RCK N-terminal domains are found at residues 331 to 473 (KKFI…DNII) and 713 to 884 (RNHI…EGSL). Residues 829 to 845 (IDSSSDSSPSVSEETAS) are compositionally biased toward low complexity. Disordered regions lie at residues 829–851 (IDSSSDSSPSVSEETASCTNGHN) and 1106–1149 (ARNQ…SEPL). The segment covering 1106-1120 (ARNQIRTNSSITSQK) has biased composition (polar residues).

The protein belongs to the potassium channel family. Calcium-activated (TC 1.A.1.3) subfamily. KCa5.1/KCNU1 sub-subfamily. As to quaternary structure, homotetramer; which constitutes the calcium-activated potassium channel. Interacts with LRRC52; this interaction changes some channel gating properties, such as shifting gating to more negative potentials at a given pH. In terms of tissue distribution, testis-specific.

It localises to the cell membrane. Its subcellular location is the cell projection. It is found in the cilium. The protein resides in the flagellum membrane. It carries out the reaction K(+)(in) = K(+)(out). Its activity is regulated as follows. Regulated by changes in cytosolic pH; activated by alkalization. VU0546110 acts as a selective inhibitor. The auxiliary subunit LRRC52 shifts the activation of KCNU1 to more negative potentials at a given pH. Its function is as follows. Testis-specific potassium channel activated by both intracellular pH and membrane voltage that mediates export of K(+). Represents the primary spermatozoan K(+) current. The channel underlies a pH-triggered membrane hyperpolarization during the process of sperm capacitation, as sperm encounter the alkaline environment near the ovum in the female reproductive tract, thereby playing an essential for male fertility. The sequence is that of Potassium channel subfamily U member 1 (KCNU1) from Macaca fascicularis (Crab-eating macaque).